The chain runs to 194 residues: Methylated-DNA--protein-cysteine methyltransferase (194 aa).

DNA-binding residues include Tyr-125 and Arg-139. The Nucleophile; methyl group acceptor role is filled by Cys-156. A DNA-binding site is contributed by Ser-162.

This sequence belongs to the MGMT family.

It is found in the nucleus. It carries out the reaction a 6-O-methyl-2'-deoxyguanosine in DNA + L-cysteinyl-[protein] = S-methyl-L-cysteinyl-[protein] + a 2'-deoxyguanosine in DNA. It catalyses the reaction a 4-O-methyl-thymidine in DNA + L-cysteinyl-[protein] = a thymidine in DNA + S-methyl-L-cysteinyl-[protein]. Its function is as follows. Involved in the cellular defense against the biological effects of O6-methylguanine (O6-MeG) and O4-methylthymine (O4-MeT) in DNA. Repairs the methylated nucleobase in DNA by stoichiometrically transferring the methyl group to a cysteine residue in the enzyme. This is a suicide reaction: the enzyme is irreversibly inactivated. This chain is Methylated-DNA--protein-cysteine methyltransferase (MGT1), found in Scheffersomyces stipitis (strain ATCC 58785 / CBS 6054 / NBRC 10063 / NRRL Y-11545) (Yeast).